The chain runs to 601 residues: ATP-dependent RNA helicase DeaD (601 aa).

Residues 6–34 carry the Q motif motif; the sequence is STFSFLGLNPFIIKSLSKMGYVKPSPIQA. Residues 37–208 form the Helicase ATP-binding domain; the sequence is IPLLLEGRDV…KRFMKNPQEI (172 aa). 50-57 is a binding site for ATP; the sequence is AQTGSGKT. Residues 156-159 carry the DEAD box motif; sequence DEAD. In terms of domain architecture, Helicase C-terminal spans 231 to 378; the sequence is KTDALIRFLE…EVQLPKIEVL (148 aa). Basic and acidic residues predominate over residues 564–581; sequence SIFNKDKNNKRRFSDNRL. Residues 564-601 form a disordered region; sequence SIFNKDKNNKRRFSDNRLNKSSSIKNETKSSFFRRKSV. Over residues 582 to 594 the composition is skewed to polar residues; the sequence is NKSSSIKNETKSS.

The protein belongs to the DEAD box helicase family. DeaD/CsdA subfamily.

It localises to the cytoplasm. It carries out the reaction ATP + H2O = ADP + phosphate + H(+). DEAD-box RNA helicase involved in various cellular processes at low temperature, including ribosome biogenesis, mRNA degradation and translation initiation. The polypeptide is ATP-dependent RNA helicase DeaD (Buchnera aphidicola subsp. Schizaphis graminum (strain Sg)).